The following is a 401-amino-acid chain: Carbamoyl phosphate synthase small chain (401 aa).

Positions 1–203 (MTETAPWTTR…KGYGTLGEAD (203 aa)) are CPSase. Residues Ser56, Gly255, and Gly257 each coordinate L-glutamine. Residues 207–395 (HVVCVDFGVK…VNLLRENKGE (189 aa)) enclose the Glutamine amidotransferase type-1 domain. Residue Cys284 is the Nucleophile of the active site. The L-glutamine site is built by Leu285, Gln288, Asn326, Gly328, and Phe329. Residues His368 and Glu370 contribute to the active site.

This sequence belongs to the CarA family. In terms of assembly, composed of two chains; the small (or glutamine) chain promotes the hydrolysis of glutamine to ammonia, which is used by the large (or ammonia) chain to synthesize carbamoyl phosphate. Tetramer of heterodimers (alpha,beta)4.

The catalysed reaction is hydrogencarbonate + L-glutamine + 2 ATP + H2O = carbamoyl phosphate + L-glutamate + 2 ADP + phosphate + 2 H(+). The enzyme catalyses L-glutamine + H2O = L-glutamate + NH4(+). Its pathway is amino-acid biosynthesis; L-arginine biosynthesis; carbamoyl phosphate from bicarbonate: step 1/1. The protein operates within pyrimidine metabolism; UMP biosynthesis via de novo pathway; (S)-dihydroorotate from bicarbonate: step 1/3. Its function is as follows. Small subunit of the glutamine-dependent carbamoyl phosphate synthetase (CPSase). CPSase catalyzes the formation of carbamoyl phosphate from the ammonia moiety of glutamine, carbonate, and phosphate donated by ATP, constituting the first step of 2 biosynthetic pathways, one leading to arginine and/or urea and the other to pyrimidine nucleotides. The small subunit (glutamine amidotransferase) binds and cleaves glutamine to supply the large subunit with the substrate ammonia. This Agrobacterium fabrum (strain C58 / ATCC 33970) (Agrobacterium tumefaciens (strain C58)) protein is Carbamoyl phosphate synthase small chain.